The sequence spans 356 residues: UDP-N-acetylglucosamine--N-acetylmuramyl-(pentapeptide) pyrophosphoryl-undecaprenol N-acetylglucosamine transferase (356 aa).

UDP-N-acetyl-alpha-D-glucosamine is bound by residues T11–G13, N123, R159, S187, I241, A260–E265, and Q286.

It belongs to the glycosyltransferase 28 family. MurG subfamily.

It localises to the cell inner membrane. The enzyme catalyses di-trans,octa-cis-undecaprenyl diphospho-N-acetyl-alpha-D-muramoyl-L-alanyl-D-glutamyl-meso-2,6-diaminopimeloyl-D-alanyl-D-alanine + UDP-N-acetyl-alpha-D-glucosamine = di-trans,octa-cis-undecaprenyl diphospho-[N-acetyl-alpha-D-glucosaminyl-(1-&gt;4)]-N-acetyl-alpha-D-muramoyl-L-alanyl-D-glutamyl-meso-2,6-diaminopimeloyl-D-alanyl-D-alanine + UDP + H(+). It functions in the pathway cell wall biogenesis; peptidoglycan biosynthesis. Functionally, cell wall formation. Catalyzes the transfer of a GlcNAc subunit on undecaprenyl-pyrophosphoryl-MurNAc-pentapeptide (lipid intermediate I) to form undecaprenyl-pyrophosphoryl-MurNAc-(pentapeptide)GlcNAc (lipid intermediate II). The polypeptide is UDP-N-acetylglucosamine--N-acetylmuramyl-(pentapeptide) pyrophosphoryl-undecaprenol N-acetylglucosamine transferase (Azoarcus sp. (strain BH72)).